We begin with the raw amino-acid sequence, 245 residues long: NAD-dependent protein deacetylase (245 aa).

A Deacetylase sirtuin-type domain is found at 1 to 245 (MIFVQQFEEV…EFVEGLSSIK (245 aa)). NAD(+) is bound by residues alanine 26, threonine 30, phenylalanine 37, arginine 38, glutamine 105, isoleucine 107, aspartate 108, and histidine 123. Phenylalanine 37 provides a ligand contact to nicotinamide. The nicotinamide site is built by isoleucine 107 and aspartate 108. Histidine 123 acts as the Proton acceptor in catalysis. 4 residues coordinate Zn(2+): cysteine 131, cysteine 134, cysteine 151, and cysteine 154. Residues threonine 190, serine 191, asparagine 216, and isoleucine 234 each coordinate NAD(+).

This sequence belongs to the sirtuin family. Class U subfamily. The cofactor is Zn(2+).

It is found in the cytoplasm. It catalyses the reaction N(6)-acetyl-L-lysyl-[protein] + NAD(+) + H2O = 2''-O-acetyl-ADP-D-ribose + nicotinamide + L-lysyl-[protein]. In terms of biological role, NAD-dependent protein deacetylase which modulates the activities of several enzymes which are inactive in their acetylated form. This chain is NAD-dependent protein deacetylase, found in Bacillus thuringiensis subsp. konkukian (strain 97-27).